A 785-amino-acid chain; its full sequence is Rho GTPase-activating protein 10 (785 aa).

Positions 7–262 constitute a BAR domain; it reads EFSDCYLDSP…IRQNPKDHKR (256 aa). The 108-residue stretch at 265 to 372 folds into the PH domain; the sequence is QFTAEGYLYV…WLEVLGGKEA (108 aa). The 186-residue stretch at 389-574 folds into the Rho-GAP domain; the sequence is AQLDKMGFTI…ILIENHEKIF (186 aa). A disordered region spans residues 576–708; that stretch reads TPPDATLPEP…PAVTPPSPKL (133 aa). The span at 584–595 shows a compositional bias: pro residues; sequence EPGPLSAPPNAP. Residues 598–608 are compositionally biased toward basic residues; it reads QSKRQGQRTKR. Positions 622-632 are enriched in basic and acidic residues; the sequence is GDRPSLPKEDT. The span at 633–650 shows a compositional bias: low complexity; that stretch reads PPSSLDSLSSPSPTTATA. Residues 675-697 are compositionally biased toward polar residues; it reads APSQARSSAVQWLNPQSPTTPSC. In terms of domain architecture, SH3 spans 727-785; the sequence is IISRKARAVYPCEAEHSSELSFEIGAIFEDVQTSREPGWLEGTLNGKRGLIPQNYVKLL.

As to quaternary structure, interacts with PKN3. Interacts with caspase-activated PAK2 proteolytic fragment PAK-2p34; the interaction does not affect ARHGAP10 GTPase activation activity towards RHOA and CDC42. Interacts via its SH3 domain with PTK2/FAK1. Interacts with PTK2B/PYK2; the interaction negatively regulates ARHGAP10 GTPase-activating activity. Interacts with MICAL1 and WDR44; complex formation might transit from GRAF2/ARHGAP10-MICAL1 to GRAF2/ARHGAP10-WDR44 complexes.

It localises to the cytoplasm. The protein resides in the perinuclear region. It is found in the cell membrane. The protein localises to the endosome membrane. In terms of biological role, GTPase-activating protein that catalyzes the conversion of active GTP-bound Rho GTPases to their inactive GDP-bound form, thus suppressing various Rho GTPase-mediated cellular processes. Also converts Cdc42 to an inactive GDP-bound state. Essential for PTKB2 regulation of cytoskeletal organization via Rho family GTPases. Inhibits PAK2 proteolytic fragment PAK-2p34 kinase activity and changes its localization from the nucleus to the perinuclear region. Stabilizes PAK-2p34 thereby increasing stimulation of cell death. Associates with MICAL1 on the endosomal membrane to promote Rab8-Rab10-dependent tubule extension. After dissociation with MICAL1, recruits WDR44 which connects the endoplasmic reticulum (ER) with the endosomal tubule, thereby participating in the export of a subset of neosynthesized proteins. In Bos taurus (Bovine), this protein is Rho GTPase-activating protein 10 (ARHGAP10).